The following is a 409-amino-acid chain: Inner membrane transport protein YqeG (409 aa).

The Periplasmic portion of the chain corresponds to 1–25 (MSNIWSKEETLWSFALYGTAVGAGT). A helical membrane pass occupies residues 26 to 46 (LFLPIQLGSAGAVVLFITALV). The Cytoplasmic portion of the chain corresponds to 47–87 (AWPLTYWPHKALCQFILSSKTSAGEGITGAVTHYYGKKIGN). The helical transmembrane segment at 88-108 (LITTLYFIAFFVVVLIYAVAI) threads the bilayer. Residues 109-127 (TNSLTEQLAKHMVIDLRIR) lie on the Periplasmic side of the membrane. The helical transmembrane segment at 128–148 (MLVSLGVVLILNLIFLMGRHA) threads the bilayer. Over 149-151 (TIR) the chain is Cytoplasmic. The chain crosses the membrane as a helical span at residues 152 to 172 (VMGFLVFPLIAYFLFLSIYLV). Residues 173–193 (GSWQPDLLTTQVEFNQNTLHQ) are Periplasmic-facing. A helical membrane pass occupies residues 194-214 (IWISIPVMVFAFSHTPIISTF). Residues 215–235 (AIDRREKYGEHAMDKCKKIMK) are Cytoplasmic-facing. The helical transmembrane segment at 236–256 (VAYLIICISVLFFVFSCLLSI) threads the bilayer. Topologically, residues 257–276 (PPSYIEAAKEEGVTILSALS) are periplasmic. The chain crosses the membrane as a helical span at residues 277-297 (MLPNAPAWLSISGIIVAVVAM). Residues 298-329 (SKSFLGTYFGVIEGATEVVKTTLQQVGVKKSR) lie on the Cytoplasmic side of the membrane. The chain crosses the membrane as a helical span at residues 330 to 350 (AFNRALSIMLVSLITFIVCCI). The Periplasmic segment spans residues 351–353 (NPN). A helical transmembrane segment spans residues 354 to 374 (AISMIYAISGPLIAMILFIMP). Topologically, residues 375–388 (TLSTYLIPALKPWR) are cytoplasmic. The chain crosses the membrane as a helical span at residues 389–409 (SIGNLITLIVGILCVSVMFFS).

This sequence belongs to the amino acid/polyamine transporter 2 family. SdaC/TdcC subfamily.

Its subcellular location is the cell inner membrane. The protein is Inner membrane transport protein YqeG (yqeG) of Escherichia coli O6:H1 (strain CFT073 / ATCC 700928 / UPEC).